A 462-amino-acid polypeptide reads, in one-letter code: Elongation factor 1-alpha 1 (462 aa).

Gly-2 is modified (n,N,N-trimethylglycine). The tr-type G domain occupies 5–242 (KTHINIVVIG…DCILPPTRPT (238 aa)). Residues 14-21 (GHVDSGKS) form a G1 region. 14–21 (GHVDSGKS) provides a ligand contact to GTP. The residue at position 36 (Lys-36) is an N6,N6,N6-trimethyllysine; alternate. Position 36 is an N6,N6-dimethyllysine; alternate (Lys-36). Position 36 is an N6-methyllysine; alternate (Lys-36). The residue at position 55 (Lys-55) is an N6,N6-dimethyllysine. Residues 70-74 (GITID) are G2. Lys-79 carries the N6,N6,N6-trimethyllysine; by EEF1AKMT1 modification. The segment at 91–94 (DAPG) is G3. 153–156 (NKMD) contacts GTP. The G4 stretch occupies residues 153-156 (NKMD). Residue Lys-165 is modified to N6,N6,N6-trimethyllysine; alternate; by EEF1AKMT3. At Lys-165 the chain carries N6,N6-dimethyllysine; alternate; by EEF1AKMT3. An N6-acetyllysine; alternate modification is found at Lys-165. The residue at position 165 (Lys-165) is an N6-methyllysine; alternate; by EEF1AKMT3. N6-acetyllysine is present on Lys-172. 194–196 (SGW) provides a ligand contact to GTP. Residues 194–196 (SGW) form a G5 region. Position 273 is an N6-acetyllysine (Lys-273). The residue at position 300 (Ser-300) is a Phosphoserine; by TGFBR1. The residue at position 301 (Glu-301) is a 5-glutamyl glycerylphosphorylethanolamine. Lys-318 is subject to N6,N6,N6-trimethyllysine; by EEF1AKMT2. Position 374 is a 5-glutamyl glycerylphosphorylethanolamine (Glu-374). Residue Lys-385 forms a Glycyl lysine isopeptide (Lys-Gly) (interchain with G-Cter in ubiquitin) linkage. An N6-acetyllysine; alternate modification is found at Lys-392. Lys-392 bears the N6-succinyllysine; alternate mark. Thr-432 carries the post-translational modification Phosphothreonine; by PASK. Lys-439 bears the N6-acetyllysine mark.

The protein belongs to the TRAFAC class translation factor GTPase superfamily. Classic translation factor GTPase family. EF-Tu/EF-1A subfamily. As to quaternary structure, found in a nuclear export complex with XPO5, EEF1A1, Ran and aminoacylated tRNA. Interacts with PARP1 and TXK. Interacts with KARS1. May interact with ERGIC2. Interacts with IFIT1 (via TPR repeats 4-7). Interacts with DLC1, facilitating distribution to the membrane periphery and ruffles upon growth factor stimulation. Interacts with ZPR1; the interaction occurs in a epidermal growth factor (EGF)-dependent manner. Interacts with PPP1R16B. Interacts with SPHK1 and SPHK2; both interactions increase SPHK1 and SPHK2 kinase activity. Interacts with guanyl-nucleotide exchange factor EEF1B2. Interacts (via middle-region) with HTATIP2 (via N-terminus); the interaction is direct and competes with EEF1A1 binding to guanyl-nucleotide exchange factor EEF1B2, thereby inhibiting GDP for GTP exchange and reactivation of EEF1A1. Interacts with tRNA. In terms of processing, ISGylated. Phosphorylated by TXK. Phosphorylation by PASK increases translation efficiency. Phosphorylated by ROCK2. Phosphorylation by TGFBR1 inhibits translation elongation. Post-translationally, trimethylated at Lys-79 by EEF1AKMT1. Methylated at Lys-165 by EEF1AKMT3, methylation by EEF1AKMT3 is dynamic as well as inducible by stress conditions, such as ER-stress, and plays a regulatory role on mRNA translation. Trimethylated at Lys-318 by EEF1AKMT2. Mono-, di-, and trimethylated at Lys-36 by EEF1AKMT4; trimethylated form is predominant. Methylation by EEF1AKMT4 contributes to the fine-tuning of translation rates for a subset of tRNAs. Trimethylated at Gly-2 by METTL13. Mono- and dimethylated at Lys-55 by METTL13; dimethylated form is predominant. In terms of processing, ubiquitinated at Lys-385 by RNF14 in response to ribosome collisions (ribosome stalling), leading to its degradation by the proteasome and rescue of stalled ribosomes.

The protein resides in the cytoplasm. The protein localises to the nucleus. It is found in the nucleolus. It localises to the cell membrane. The enzyme catalyses GTP + H2O = GDP + phosphate + H(+). In terms of biological role, translation elongation factor that catalyzes the GTP-dependent binding of aminoacyl-tRNA (aa-tRNA) to the A-site of ribosomes during the elongation phase of protein synthesis. Base pairing between the mRNA codon and the aa-tRNA anticodon promotes GTP hydrolysis, releasing the aa-tRNA from EEF1A1 and allowing its accommodation into the ribosome. The growing protein chain is subsequently transferred from the P-site peptidyl tRNA to the A-site aa-tRNA, extending it by one amino acid through ribosome-catalyzed peptide bond formation. Also plays a role in the positive regulation of IFNG transcription in T-helper 1 cells as part of an IFNG promoter-binding complex with TXK and PARP1. Also plays a role in cytoskeleton organization by promoting actin bundling. This is Elongation factor 1-alpha 1 (EEF1A1) from Cricetulus griseus (Chinese hamster).